Reading from the N-terminus, the 902-residue chain is Methionine--tRNA ligase, cytoplasmic (902 aa).

One can recognise a GST C-terminal domain in the interval 74 to 212 (GWEQDDLTNQ…QKQPQPQPPP (139 aa)). The 'HIGH' region signature appears at 275 to 285 (PYVNNVPHLGN). The 'KMSKS' region signature appears at 595–599 (KFSKS). Lys-598 serves as a coordination point for ATP. Residue Ser-827 is modified to Phosphoserine. Thr-837 is subject to Phosphothreonine. The region spanning 843–899 (HIQTLTDEVTKQGNVVRELKAQKADKNQVAAEVAKLLDLKKQLALAEGKPIETPKGK) is the WHEP-TRS domain.

Belongs to the class-I aminoacyl-tRNA synthetase family. As to quaternary structure, monomer. Part of a multisubunit complex that groups tRNA ligases for Arg (RARS1), Asp (DARS1), Gln (QARS1), Ile (IARS1), Leu (LARS1), Lys (KARS1), Met (MARS1) the bifunctional ligase for Glu and Pro (EPRS1) and the auxiliary subunits AIMP1/p43, AIMP2/p38 and EEF1E1/p18. Forms a linear complex that contains MARS1, EEF1E1, EPRS1 and AIMP2 that is at the core of the multisubunit complex.

Its subcellular location is the cytoplasm. It is found in the cytosol. The protein resides in the nucleus. The protein localises to the nucleolus. It catalyses the reaction tRNA(Met) + L-methionine + ATP = L-methionyl-tRNA(Met) + AMP + diphosphate. Functionally, catalyzes the specific attachment of an amino acid to its cognate tRNA in a 2 step reaction: the amino acid (AA) is first activated by ATP to form AA-AMP and then transferred to the acceptor end of the tRNA. Plays a role in the synthesis of ribosomal RNA in the nucleolus. The polypeptide is Methionine--tRNA ligase, cytoplasmic (Mars1) (Mus musculus (Mouse)).